The following is a 270-amino-acid chain: Tryptophan synthase alpha chain (270 aa).

Active-site proton acceptor residues include Glu49 and Asp60.

The protein belongs to the TrpA family. As to quaternary structure, tetramer of two alpha and two beta chains.

It carries out the reaction (1S,2R)-1-C-(indol-3-yl)glycerol 3-phosphate + L-serine = D-glyceraldehyde 3-phosphate + L-tryptophan + H2O. It participates in amino-acid biosynthesis; L-tryptophan biosynthesis; L-tryptophan from chorismate: step 5/5. Functionally, the alpha subunit is responsible for the aldol cleavage of indoleglycerol phosphate to indole and glyceraldehyde 3-phosphate. This Buchnera aphidicola subsp. Diuraphis noxia protein is Tryptophan synthase alpha chain.